A 199-amino-acid polypeptide reads, in one-letter code: Outer dense fiber protein 4 (199 aa).

The segment covering 1-14 (MNIRSLERAGRAGK) has biased composition (basic and acidic residues). A disordered region spans residues 1 to 25 (MNIRSLERAGRAGKQDGVAVSPGQE). Phosphoserine is present on S53. Transmembrane regions (helical) follow at residues 68–88 (IAQV…VVMV), 109–128 (VTTK…LHIY), and 159–179 (LALG…IPGL).

It is found in the membrane. In terms of biological role, component of the outer dense fibers (ODF) of spermatozoa which could be involved in sperm tail structure, sperm movement and general organization of cellular cytoskeleton. The sequence is that of Outer dense fiber protein 4 (ODF4) from Bos taurus (Bovine).